Consider the following 215-residue polypeptide: Ubiquitin-conjugating enzyme E2 S (215 aa).

Residues 9 to 155 (DVIKRVVKEL…AKLFTSIHAS (147 aa)) form the UBC core domain. The active-site Glycyl thioester intermediate is the Cys-93. Residues 159–215 (IDSNNNNENSTTTPTTTTTATTPSTNTASISSPVKKKTETTNSTTTKVQPKKSLKRL) are disordered. Positions 161 to 190 (SNNNNENSTTTPTTTTTATTPSTNTASISS) are enriched in low complexity.

This sequence belongs to the ubiquitin-conjugating enzyme family.

It catalyses the reaction S-ubiquitinyl-[E1 ubiquitin-activating enzyme]-L-cysteine + [E2 ubiquitin-conjugating enzyme]-L-cysteine = [E1 ubiquitin-activating enzyme]-L-cysteine + S-ubiquitinyl-[E2 ubiquitin-conjugating enzyme]-L-cysteine.. It participates in protein modification; protein ubiquitination. In terms of biological role, catalyzes the covalent attachment of ubiquitin to other proteins. Acts as an essential factor of the anaphase promoting complex/cyclosome (APC/C), a cell cycle-regulated ubiquitin ligase that controls progression through mitosis. Acts by specifically elongating polyubiquitin chains initiated by the E2 enzyme ubch10 on APC/C substrates, enhancing the degradation of APC/C substrates by the proteasome and promoting mitotic exit. This is Ubiquitin-conjugating enzyme E2 S (ube2s) from Dictyostelium discoideum (Social amoeba).